Reading from the N-terminus, the 369-residue chain is 3-dehydroquinate synthase (369 aa).

NAD(+)-binding positions include Gly110–Asp114, Thr134–Thr135, Lys147, Lys156, and Thr174–Thr177. Glu189, His254, and His271 together coordinate Zn(2+).

It belongs to the sugar phosphate cyclases superfamily. Dehydroquinate synthase family. The cofactor is Co(2+). Zn(2+) is required as a cofactor. It depends on NAD(+) as a cofactor.

The protein resides in the cytoplasm. The enzyme catalyses 7-phospho-2-dehydro-3-deoxy-D-arabino-heptonate = 3-dehydroquinate + phosphate. It participates in metabolic intermediate biosynthesis; chorismate biosynthesis; chorismate from D-erythrose 4-phosphate and phosphoenolpyruvate: step 2/7. Catalyzes the conversion of 3-deoxy-D-arabino-heptulosonate 7-phosphate (DAHP) to dehydroquinate (DHQ). This chain is 3-dehydroquinate synthase, found in Cyanothece sp. (strain PCC 7425 / ATCC 29141).